We begin with the raw amino-acid sequence, 155 residues long: MTIYAFYIYSRKCECVFAHRWKPSDRNSMETLVSQLEQNSIEDDMEKLIFGVVFSLRNMVKKITADQDQFMSYTTSKYKLHFYETPTNLRLIFITNPKIDSLTHVLQQIYTTLYVEFVVKHPLYTHVPPSAEEGGINCEIFRITLDRFVRTLSCF.

The protein belongs to the TRAPP small subunits family. BET5 subfamily. Part of the multisubunit TRAPP (transport protein particle) complex composed of bet3, bet5, trs20, trs23, trs31, trs33, trs65, trs85, trs120 and trs130.

The protein localises to the golgi apparatus. The protein resides in the cis-Golgi network. Its subcellular location is the endoplasmic reticulum. Its function is as follows. May play a role in vesicular transport from endoplasmic reticulum to Golgi. This Schizosaccharomyces pombe (strain 972 / ATCC 24843) (Fission yeast) protein is Transport protein particle subunit bet5 (bet5).